Reading from the N-terminus, the 356-residue chain is Probable neutral protease 2 homolog ARB_04769 (356 aa).

A signal peptide spans 1 to 17 (MQFTALLAALGAPLALA). Residues 18–183 (ASIPAAAHNH…DDSTGVIDKR (166 aa)) constitute a propeptide that is removed on maturation. 2 cysteine pairs are disulfide-bonded: Cys-191/Cys-262 and Cys-269/Cys-287. Residue Asn-205 is glycosylated (N-linked (GlcNAc...) asparagine). His-311 provides a ligand contact to Zn(2+). Glu-312 is an active-site residue. Zn(2+) contacts are provided by His-315 and Asp-326.

It belongs to the peptidase M35 family. It depends on Zn(2+) as a cofactor.

The protein resides in the secreted. The enzyme catalyses Preferential cleavage of bonds with hydrophobic residues in P1'. Also 3-Asn-|-Gln-4 and 8-Gly-|-Ser-9 bonds in insulin B chain.. Functionally, probable secreted metalloprotease that shows high activities on basic nuclear substrates such as histone and protamine. May be involved in virulence. This chain is Probable neutral protease 2 homolog ARB_04769, found in Arthroderma benhamiae (strain ATCC MYA-4681 / CBS 112371) (Trichophyton mentagrophytes).